We begin with the raw amino-acid sequence, 226 residues long: N-acetylmuramic acid 6-phosphate phosphatase (226 aa).

The Nucleophile role is filled by D12. Residues D12, D14, and D171 each coordinate Mg(2+). The Proton donor role is filled by D14.

Belongs to the HAD-like hydrolase superfamily. CbbY/CbbZ/Gph/YieH family. Phosphatase MupP subfamily. Mg(2+) serves as cofactor.

It carries out the reaction N-acetyl-D-muramate 6-phosphate + H2O = N-acetyl-D-muramate + phosphate. It participates in cell wall biogenesis; peptidoglycan recycling. Specifically catalyzes the dephosphorylation of N-acetylmuramate 6-phosphate (MurNAc-6P) to MurNac. Is involved in peptidoglycan recycling as part of a cell wall recycling pathway that bypasses de novo biosynthesis of the peptidoglycan precursor UDP-MurNAc. Plays a role in intrinsic resistance to fosfomycin, which targets the de novo synthesis of UDP-MurNAc. The chain is N-acetylmuramic acid 6-phosphate phosphatase from Pseudomonas aeruginosa (strain ATCC 15692 / DSM 22644 / CIP 104116 / JCM 14847 / LMG 12228 / 1C / PRS 101 / PAO1).